Reading from the N-terminus, the 148-residue chain is Ribonuclease 4 (148 aa).

A signal peptide spans 1–29; the sequence is MMDLQRTQSLLLLLVLTLLGLGLVQPSYG. Position 30 is a pyrrolidone carboxylic acid (Q30). Positions 36, 41, 69, 72, and 73 each coordinate dUMP. The Proton acceptor role is filled by H41. Intrachain disulfides connect C54–C110, C68–C121, C86–C136, and C93–C100. The Proton donor role is filled by H145. A dUMP-binding site is contributed by F146.

It belongs to the pancreatic ribonuclease family. As to expression, expressed in the cortical tubules of the kidney (at protein level). Also expressed in the medullary tubules of the kidney.

Its subcellular location is the secreted. Functionally, cleaves preferentially after uridine bases. Has antimicrobial activity against uropathogenic E.coli (UPEC). Probably contributes to urinary tract sterility. This Mus musculus (Mouse) protein is Ribonuclease 4 (Rnase4).